A 134-amino-acid chain; its full sequence is Prefoldin subunit 4 (134 aa).

A2 bears the N-acetylalanine mark. The residue at position 125 (S125) is a Phosphoserine.

The protein belongs to the prefoldin subunit beta family. In terms of assembly, heterohexamer of two PFD-alpha type and four PFD-beta type subunits. Interacts with URI1; the interaction is phosphorylation-dependent and occurs in a growth-dependent manner.

The protein localises to the nucleus. The protein resides in the cytoplasm. Its subcellular location is the mitochondrion. Functionally, binds specifically to cytosolic chaperonin (c-CPN) and transfers target proteins to it. Binds to nascent polypeptide chain and promotes folding in an environment in which there are many competing pathways for nonnative proteins. The protein is Prefoldin subunit 4 (PFDN4) of Homo sapiens (Human).